A 128-amino-acid polypeptide reads, in one-letter code: Keratin-associated protein 2-3 (128 aa).

The tract at residues Cys5–Pro112 is 10 X 5 AA repeats of C-C-[CDPQRWG]-[APRS]-[CIPSTVD].

The protein belongs to the KRTAP type 2 family. Interacts with hair keratins.

In terms of biological role, in the hair cortex, hair keratin intermediate filaments are embedded in an interfilamentous matrix, consisting of hair keratin-associated proteins (KRTAP), which are essential for the formation of a rigid and resistant hair shaft through their extensive disulfide bond cross-linking with abundant cysteine residues of hair keratins. The matrix proteins include the high-sulfur and high-glycine-tyrosine keratins. This chain is Keratin-associated protein 2-3 (KRTAP2-3), found in Homo sapiens (Human).